The chain runs to 143 residues: Transcriptional regulator MraZ (143 aa).

2 consecutive SpoVT-AbrB domains span residues 5-47 and 76-119; these read EYRH…PQVE and ATEC…SKEL.

This sequence belongs to the MraZ family. Forms oligomers.

The protein resides in the cytoplasm. The protein localises to the nucleoid. The protein is Transcriptional regulator MraZ of Halalkalibacterium halodurans (strain ATCC BAA-125 / DSM 18197 / FERM 7344 / JCM 9153 / C-125) (Bacillus halodurans).